We begin with the raw amino-acid sequence, 382 residues long: Lysophosphatidylserine lipase ABHD12 (382 aa).

The segment covering 1-12 (MRKRKGSADHDS) has biased composition (basic and acidic residues). Residues 1 to 45 (MRKRKGSADHDSSFTATLTDGSSDLKQCHKGTDADTDPGGSGKEM) form a disordered region. Residues 1 to 60 (MRKRKGSADHDSSFTATLTDGSSDLKQCHKGTDADTDPGGSGKEMGRRCRRGGLMWRLRR) lie on the Cytoplasmic side of the membrane. Residues 13 to 25 (SFTATLTDGSSDL) show a composition bias toward polar residues. Residues 61 to 81 (ILIWLLGIYIAIPVIIKVCPS) traverse the membrane as a helical segment. At 82–382 (IQAKLVFLNF…DFLRAPHPHG (301 aa)) the chain is on the extracellular side. N-linked (GlcNAc...) asparagine glycosylation occurs at N109. The Nucleophile role is filled by S232. Catalysis depends on charge relay system residues D319 and H358.

It belongs to the serine esterase family. In terms of tissue distribution, ubiquitously expressed in adult tissues.

The protein resides in the endoplasmic reticulum membrane. It catalyses the reaction 1-(9Z-octadecenoyl)-sn-glycero-3-phospho-L-serine + H2O = sn-glycero-3-phospho-L-serine + (9Z)-octadecenoate + H(+). The catalysed reaction is 1-(9Z-octadecenoyl)-sn-glycero-3-phospho-(1'-sn-glycerol) + H2O = sn-glycero-3-phospho-(1'-sn-glycerol) + (9Z)-octadecenoate + H(+). It carries out the reaction 1-(9Z-octadecenoyl)-sn-glycero-3-phospho-(1D-myo-inositol) + H2O = sn-glycero-3-phospho-1D-myo-inositol + (9Z)-octadecenoate + H(+). The enzyme catalyses 1-(9Z-octadecenoyl)-sn-glycero-3-phosphoethanolamine + H2O = sn-glycero-3-phosphoethanolamine + (9Z)-octadecenoate + H(+). It catalyses the reaction 1-(9Z-octadecenoyl)-sn-glycero-3-phosphocholine + H2O = 1-(9Z-octadecenoyl)-sn-glycerol + phosphocholine + H(+). The catalysed reaction is 2-(9Z-octadecenoyl)-glycerol + H2O = glycerol + (9Z)-octadecenoate + H(+). It carries out the reaction 1-hexadecanoyl-sn-glycero-3-phospho-L-serine + H2O = sn-glycero-3-phospho-L-serine + hexadecanoate + H(+). The enzyme catalyses 2-(5Z,8Z,11Z,14Z-eicosatetraenoyl)-glycerol + H2O = glycerol + (5Z,8Z,11Z,14Z)-eicosatetraenoate + H(+). It catalyses the reaction Hydrolyzes glycerol monoesters of long-chain fatty acids.. The catalysed reaction is 1-decanoylglycerol + H2O = decanoate + glycerol + H(+). It carries out the reaction 1-dodecanoylglycerol + H2O = dodecanoate + glycerol + H(+). The enzyme catalyses 1-tetradecanoylglycerol + H2O = tetradecanoate + glycerol + H(+). It catalyses the reaction 2-hexadecanoylglycerol + H2O = glycerol + hexadecanoate + H(+). The catalysed reaction is 1-(9Z-octadecenoyl)-glycerol + H2O = glycerol + (9Z)-octadecenoate + H(+). It carries out the reaction 2-(9Z,12Z-octadecadienoyl)-glycerol + H2O = (9Z,12Z)-octadecadienoate + glycerol + H(+). The enzyme catalyses 1-(5Z,8Z,11Z,14Z-eicosatetraenoyl)-glycerol + H2O = glycerol + (5Z,8Z,11Z,14Z)-eicosatetraenoate + H(+). It catalyses the reaction 1-(9Z,12Z-octadecadienoyl)-glycerol + H2O = (9Z,12Z)-octadecadienoate + glycerol + H(+). The catalysed reaction is 1-hexadecanoylglycerol + H2O = glycerol + hexadecanoate + H(+). It carries out the reaction 1-octadecanoylglycerol + H2O = octadecanoate + glycerol + H(+). The enzyme catalyses 1-octadecanoyl-2-(9,10-epoxyoctadecanoyl)-sn-glycero-3-phospho-L-serine + H2O = 9,10-epoxyoctadecanoate + 1-octadecanoyl-sn-glycero-3-phosphoserine + H(+). It catalyses the reaction 1-octadecanoyl-2-(10-hydroxyoctadecanoyl)-sn-glycero-3-phospho-L-serine + H2O = 1-octadecanoyl-sn-glycero-3-phosphoserine + 10-hydroxyoctadecanoate + H(+). The catalysed reaction is 1-hexadecanoyl-2-(10-hydroxyoctadecanoyl)-sn-glycero-3-phospho-L-serine + H2O = 10-hydroxyoctadecanoate + 1-hexadecanoyl-sn-glycero-3-phospho-L-serine + H(+). In terms of biological role, lysophosphatidylserine (LPS) lipase that mediates the hydrolysis of lysophosphatidylserine, a class of signaling lipids that regulates immunological and neurological processes. Represents a major lysophosphatidylserine lipase in the brain, thereby playing a key role in the central nervous system. Also able to hydrolyze oxidized phosphatidylserine; oxidized phosphatidylserine is produced in response to severe inflammatory stress and constitutes a proapoptotic 'eat me' signal. Also has monoacylglycerol (MAG) lipase activity: hydrolyzes 2-arachidonoylglycerol (2-AG), thereby acting as a regulator of endocannabinoid signaling pathways. Has a strong preference for very-long-chain lipid substrates; substrate specificity is likely due to improved catalysis and not improved substrate binding. In Danio rerio (Zebrafish), this protein is Lysophosphatidylserine lipase ABHD12.